A 145-amino-acid polypeptide reads, in one-letter code: MIALIQRVKRASVSVDNTIVGKIDQGLLVLLGIEREDNIEKMVKLATKVINYRVFSDEDGKMNLNLAQVGGQLLVVSQFTLAADTGKGLRPSFSCAATPEQADRLYLAFVEYCRQQGVMTQTGQFGADMQVELVNDGPVTFNLQV.

The Gly-cisPro motif, important for rejection of L-amino acids motif lies at 137-138 (GP).

This sequence belongs to the DTD family. Homodimer.

The protein localises to the cytoplasm. It carries out the reaction glycyl-tRNA(Ala) + H2O = tRNA(Ala) + glycine + H(+). The enzyme catalyses a D-aminoacyl-tRNA + H2O = a tRNA + a D-alpha-amino acid + H(+). Functionally, an aminoacyl-tRNA editing enzyme that deacylates mischarged D-aminoacyl-tRNAs. Also deacylates mischarged glycyl-tRNA(Ala), protecting cells against glycine mischarging by AlaRS. Acts via tRNA-based rather than protein-based catalysis; rejects L-amino acids rather than detecting D-amino acids in the active site. By recycling D-aminoacyl-tRNA to D-amino acids and free tRNA molecules, this enzyme counteracts the toxicity associated with the formation of D-aminoacyl-tRNA entities in vivo and helps enforce protein L-homochirality. The protein is D-aminoacyl-tRNA deacylase of Shewanella frigidimarina (strain NCIMB 400).